The chain runs to 101 residues: Large ribosomal subunit protein bL21 (101 aa).

The protein belongs to the bacterial ribosomal protein bL21 family. As to quaternary structure, part of the 50S ribosomal subunit. Contacts protein L20.

Functionally, this protein binds to 23S rRNA in the presence of protein L20. This is Large ribosomal subunit protein bL21 from Anaeromyxobacter dehalogenans (strain 2CP-1 / ATCC BAA-258).